The primary structure comprises 413 residues: 3-hydroxy-3-methylglutaryl-coenzyme A reductase (413 aa).

Active-site charge relay system residues include glutamate 106 and aspartate 312. Histidine 408 acts as the Proton donor in catalysis.

This sequence belongs to the HMG-CoA reductase family.

It catalyses the reaction (R)-mevalonate + 2 NADP(+) + CoA = (3S)-3-hydroxy-3-methylglutaryl-CoA + 2 NADPH + 2 H(+). Its pathway is metabolic intermediate biosynthesis; (R)-mevalonate biosynthesis; (R)-mevalonate from acetyl-CoA: step 3/3. Converts HMG-CoA to mevalonate. The protein is 3-hydroxy-3-methylglutaryl-coenzyme A reductase (hmgA) of Pyrococcus horikoshii (strain ATCC 700860 / DSM 12428 / JCM 9974 / NBRC 100139 / OT-3).